A 250-amino-acid chain; its full sequence is UPF0259 membrane protein Spro_2675 (250 aa).

Transmembrane regions (helical) follow at residues 23-43 (ILMLALLTAFISVLLNQAFSP), 87-107 (AATFSALVGNVLLVGGMLTLI), 132-152 (LLLLLFICTLLIQLGLTLFVV), 156-176 (IMAIAFSLAPVITATDKKGVF), 192-212 (VIVPAMMLWLAAKLLVLFMVS), and 222-242 (ASVVLTALSNLVSALLLIYLF).

It belongs to the UPF0259 family.

It localises to the cell inner membrane. This chain is UPF0259 membrane protein Spro_2675, found in Serratia proteamaculans (strain 568).